Consider the following 58-residue polypeptide: Succinate dehydrogenase subunit 8B, mitochondrial (58 aa).

Component of complex II composed of eight subunits in plants: four classical SDH subunits SDH1, SDH2, SDH3 and SDH4 (a flavoprotein (FP), an iron-sulfur protein (IP), and a cytochrome b composed of a large and a small subunit.), as well as four subunits unknown in mitochondria from bacteria and heterotrophic eukaryotes.

Its subcellular location is the mitochondrion inner membrane. It functions in the pathway carbohydrate metabolism; tricarboxylic acid cycle. This Oryza sativa subsp. japonica (Rice) protein is Succinate dehydrogenase subunit 8B, mitochondrial.